The following is a 563-amino-acid chain: L-lactate permease (563 aa).

14 helical membrane passes run 14-34, 37-57, 73-93, 131-151, 157-177, 194-214, 220-240, 249-269, 304-324, 381-401, 419-439, 448-468, 506-526, and 542-562; these read LLLS…ALAI, MKGY…AVLV, AVYG…LYKI, GAAG…GLGF, AGIC…GIPI, MVGR…IIIM, ALEI…VQYL, LPDV…LKWW, IFKA…WGIP, LGSA…ITAI, LPIL…SSGM, ALTG…GVFI, VTGK…VGLA, and FLLL…SWMI.

Belongs to the lactate permease family.

It localises to the cell membrane. In terms of biological role, is the principal permease for the uptake of L-lactate in B.subtilis. The polypeptide is L-lactate permease (lutP) (Bacillus subtilis (strain 168)).